The sequence spans 1270 residues: Glycine betaine reductase ATRR (1270 aa).

An adenylation (A) domain region spans residues 14 to 418 (FTQQVRASPN…MIKLRGYSVV (405 aa)). In terms of domain architecture, Carrier spans 528-605 (KEDPIGIEDI…GHLDTVRAIR (78 aa)). An O-(pantetheine 4'-phosphoryl)serine modification is found at Ser-565. The interval 643 to 937 (KTVLLTGVTG…EPLSWDDWVA (295 aa)) is carboxylic acid reductase domain R1. Positions 1026–1256 (PLSGKVAVVT…IYALRQPEHV (231 aa)) are aldehyde reductase domain R2.

Belongs to the NRP synthetase family.

The tetramethylammonium ion, which mimics the head group of glycine betaine, acts as a competitive inhibitor of ATRR A domain, whereas the potency decreased by three orders of magnitude with dimethylammonium. Choline is a mixed inhibitor for both glycine betaine reductase and aldehyde reductase activity but more potent in competition against glycine betaine in the first reduction step. Therefore, choline could act as a feedback inhibitor to regulate ATRR enzymatic activity. The lowered binding affinity of choline to R2 favors the release of choline after glycine betaine aldehyde reduction to avoid direct product inhibition. NRPS-like enzyme with an unusual domain architecture that converts back glycine betaine to choline via a 2-step reduction mechanism, and thereby can be an alternative source of choline. Permits direct reutilization of endogenously stored glycine betaine for on-demand biosynthesis of choline and choline derivatives, including phospholipid phosphatidylcholine (PC) which has an essential role in maintaining membrane integrity and functionality, or choline-O-sulfate, a mean for intracellular sulfate storage. Glycine betaine is activated by the adenylation (A) domain, and transferred to the thiolation (T) domain. Movement of the phosphopantetheine arm to the thioester reductase domain R1 then allows thioester reduction by NADPH of glycine betainoyl thioester to glycine betaine aldehyde, which is in turn reduced to choline by the aldehyde reductase domain R2. The chain is Glycine betaine reductase ATRR from Emericella nidulans (strain FGSC A4 / ATCC 38163 / CBS 112.46 / NRRL 194 / M139) (Aspergillus nidulans).